The sequence spans 429 residues: Histidine--tRNA ligase (429 aa).

Belongs to the class-II aminoacyl-tRNA synthetase family. Homodimer.

It localises to the cytoplasm. It catalyses the reaction tRNA(His) + L-histidine + ATP = L-histidyl-tRNA(His) + AMP + diphosphate + H(+). The sequence is that of Histidine--tRNA ligase from Streptococcus pneumoniae (strain JJA).